The primary structure comprises 85 residues: Large ribosomal subunit protein bL27 (85 aa).

The tract at residues 1–24 is disordered; sequence MAHKKAGGSSRNGRDSHSKRLGVK.

This sequence belongs to the bacterial ribosomal protein bL27 family.

The protein is Large ribosomal subunit protein bL27 of Nitrosomonas eutropha (strain DSM 101675 / C91 / Nm57).